A 231-amino-acid chain; its full sequence is 2-C-methyl-D-erythritol 4-phosphate cytidylyltransferase (231 aa).

It belongs to the IspD/TarI cytidylyltransferase family. IspD subfamily.

It carries out the reaction 2-C-methyl-D-erythritol 4-phosphate + CTP + H(+) = 4-CDP-2-C-methyl-D-erythritol + diphosphate. The protein operates within isoprenoid biosynthesis; isopentenyl diphosphate biosynthesis via DXP pathway; isopentenyl diphosphate from 1-deoxy-D-xylulose 5-phosphate: step 2/6. Catalyzes the formation of 4-diphosphocytidyl-2-C-methyl-D-erythritol from CTP and 2-C-methyl-D-erythritol 4-phosphate (MEP). The chain is 2-C-methyl-D-erythritol 4-phosphate cytidylyltransferase from Rubrobacter xylanophilus (strain DSM 9941 / JCM 11954 / NBRC 16129 / PRD-1).